A 70-amino-acid polypeptide reads, in one-letter code: uncharacterized protein (70 aa).

A helical transmembrane segment spans residues 50–70 (FYLLVFFIILWVSREAFFYLI).

This sequence belongs to the M.jannaschii MJ0023/MJ0349/MJ1072/MJ1074/MJ1107/MJECL16 family.

The protein localises to the membrane. This is an uncharacterized protein from Methanocaldococcus jannaschii (strain ATCC 43067 / DSM 2661 / JAL-1 / JCM 10045 / NBRC 100440) (Methanococcus jannaschii).